The sequence spans 116 residues: Large ribosomal subunit protein uL24 (116 aa).

Positions 1-27 (MAGRKSSTPTRHKMHVKTGDTVQVISG) are disordered.

The protein belongs to the universal ribosomal protein uL24 family. As to quaternary structure, part of the 50S ribosomal subunit.

Functionally, one of two assembly initiator proteins, it binds directly to the 5'-end of the 23S rRNA, where it nucleates assembly of the 50S subunit. Its function is as follows. One of the proteins that surrounds the polypeptide exit tunnel on the outside of the subunit. The polypeptide is Large ribosomal subunit protein uL24 (Picosynechococcus sp. (strain ATCC 27264 / PCC 7002 / PR-6) (Agmenellum quadruplicatum)).